A 236-amino-acid chain; its full sequence is Biosynthetic peptidoglycan transglycosylase (236 aa).

Residues 12–31 (ALFWFAAGSIVLVLVFRWVP) traverse the membrane as a helical segment.

The protein belongs to the glycosyltransferase 51 family.

It localises to the cell inner membrane. It carries out the reaction [GlcNAc-(1-&gt;4)-Mur2Ac(oyl-L-Ala-gamma-D-Glu-L-Lys-D-Ala-D-Ala)](n)-di-trans,octa-cis-undecaprenyl diphosphate + beta-D-GlcNAc-(1-&gt;4)-Mur2Ac(oyl-L-Ala-gamma-D-Glu-L-Lys-D-Ala-D-Ala)-di-trans,octa-cis-undecaprenyl diphosphate = [GlcNAc-(1-&gt;4)-Mur2Ac(oyl-L-Ala-gamma-D-Glu-L-Lys-D-Ala-D-Ala)](n+1)-di-trans,octa-cis-undecaprenyl diphosphate + di-trans,octa-cis-undecaprenyl diphosphate + H(+). It functions in the pathway cell wall biogenesis; peptidoglycan biosynthesis. Functionally, peptidoglycan polymerase that catalyzes glycan chain elongation from lipid-linked precursors. The chain is Biosynthetic peptidoglycan transglycosylase from Pseudomonas putida (strain W619).